The chain runs to 341 residues: N-acetyl-gamma-glutamyl-phosphate reductase (341 aa).

The active site involves Cys151.

This sequence belongs to the NAGSA dehydrogenase family. Type 1 subfamily.

Its subcellular location is the cytoplasm. The catalysed reaction is N-acetyl-L-glutamate 5-semialdehyde + phosphate + NADP(+) = N-acetyl-L-glutamyl 5-phosphate + NADPH + H(+). The protein operates within amino-acid biosynthesis; L-arginine biosynthesis; N(2)-acetyl-L-ornithine from L-glutamate: step 3/4. Its function is as follows. Catalyzes the NADPH-dependent reduction of N-acetyl-5-glutamyl phosphate to yield N-acetyl-L-glutamate 5-semialdehyde. This Chlorobaculum tepidum (strain ATCC 49652 / DSM 12025 / NBRC 103806 / TLS) (Chlorobium tepidum) protein is N-acetyl-gamma-glutamyl-phosphate reductase.